A 933-amino-acid polypeptide reads, in one-letter code: C-1-tetrahydrofolate synthase, cytoplasmic (933 aa).

A methylenetetrahydrofolate dehydrogenase and cyclohydrolase region spans residues 1–303; sequence MWEPQGSLDP…DRLLAPTWPL (303 aa). Substrate contacts are provided by residues 51–55 and 98–100; these read YIRMK and VQM. NADP(+) is bound by residues 170-172 and Ser-195; that span reads GRS. 270-274 contacts substrate; the sequence is PGGVG. The segment at 304–933 is formyltetrahydrofolate synthetase; the sequence is RPLRITPLSP…TKTGEIEGLF (630 aa). Residue 378-385 participates in ATP binding; the sequence is TPLGEGKS.

It in the N-terminal section; belongs to the tetrahydrofolate dehydrogenase/cyclohydrolase family. In the C-terminal section; belongs to the formate--tetrahydrofolate ligase family. In terms of assembly, homodimer.

Its subcellular location is the cytoplasm. The catalysed reaction is (6R)-5,10-methylene-5,6,7,8-tetrahydrofolate + NADP(+) = (6R)-5,10-methenyltetrahydrofolate + NADPH. The enzyme catalyses (6R)-5,10-methenyltetrahydrofolate + H2O = (6R)-10-formyltetrahydrofolate + H(+). It carries out the reaction (6S)-5,6,7,8-tetrahydrofolate + formate + ATP = (6R)-10-formyltetrahydrofolate + ADP + phosphate. The protein operates within one-carbon metabolism; tetrahydrofolate interconversion. The sequence is that of C-1-tetrahydrofolate synthase, cytoplasmic from Spodoptera frugiperda (Fall armyworm).